The following is a 397-amino-acid chain: UPF0597 protein Tmel_1007 (397 aa).

Belongs to the UPF0597 family.

The polypeptide is UPF0597 protein Tmel_1007 (Thermosipho melanesiensis (strain DSM 12029 / CIP 104789 / BI429)).